We begin with the raw amino-acid sequence, 324 residues long: NADH-ubiquinone oxidoreductase chain 1 (324 aa).

8 helical membrane-spanning segments follow: residues 3–23 (FILSLIGSLLLIICVLVSVAF), 77–97 (ISPIFSLFLSLFVWMCMPFFV), 104–124 (LGGLFFLCCTSLGVYTVMVAG), 150–170 (LALIMLSFIFLIGSYNMIYFF), 174–194 (IYMWFLIILFPMSLVWLTISL), 226–246 (LIFMAEYASILFMSMLFCVIF), 250–270 (DVFNLLFYVKLTFISFVFIWA), and 297–317 (YLLFFIGFKILLFSFLLWIFF).

The protein belongs to the complex I subunit 1 family.

Its subcellular location is the mitochondrion inner membrane. The catalysed reaction is a ubiquinone + NADH + 5 H(+)(in) = a ubiquinol + NAD(+) + 4 H(+)(out). Its function is as follows. Core subunit of the mitochondrial membrane respiratory chain NADH dehydrogenase (Complex I) that is believed to belong to the minimal assembly required for catalysis. Complex I functions in the transfer of electrons from NADH to the respiratory chain. The immediate electron acceptor for the enzyme is believed to be ubiquinone. The sequence is that of NADH-ubiquinone oxidoreductase chain 1 (mt:ND1) from Drosophila yakuba (Fruit fly).